A 796-amino-acid polypeptide reads, in one-letter code: Probable coatomer subunit beta' (796 aa).

WD repeat units lie at residues 4-42 (LDFQRKLLSHTERVKAVDFHPTEPWVIASHYNGQVGIWN), 46-84 (QTLVRSFDINDVPIRACAFIARKNWFVCGSDDFQVRVYN), 88-126 (GEKVTQFEAHPDYIRALVVHPTQPFLLTSSDDMTIKCFN), 131-170 (WKCVQTFEGHSRYVMSLAINPKDTNTFASSCLDGTVKVWS), 172-214 (GSSV…KVWD), and 218-256 (KACVRILEGHTNNVSFAFFHSKFPIIISGSEDGTVKIWH).

It belongs to the WD repeat COPB2 family. Oligomeric complex that consists of at least the alpha, beta, beta', gamma, delta, epsilon and zeta subunits.

Its subcellular location is the cytoplasm. It localises to the golgi apparatus membrane. The protein localises to the cytoplasmic vesicle. The protein resides in the COPI-coated vesicle membrane. In terms of biological role, the coatomer is a cytosolic protein complex that binds to dilysine motifs and reversibly associates with Golgi non-clathrin-coated vesicles, which further mediate biosynthetic protein transport from the ER, via the Golgi up to the trans Golgi network. Coatomer complex is required for budding from Golgi membranes, and is essential for the retrograde Golgi-to-ER transport of dilysine-tagged proteins. This is Probable coatomer subunit beta' (sec27) from Schizosaccharomyces pombe (strain 972 / ATCC 24843) (Fission yeast).